The primary structure comprises 364 residues: Peptidyl-prolyl cis-trans isomerase D (364 aa).

Positions 7–170 constitute a PPIase cyclophilin-type domain; sequence YFDITIGNKP…EDAVIAKCGE (164 aa). TPR repeat units lie at residues 208–241, 261–294, and 301–334; these read ATHL…LNEK, IPCY…DSKY, and TKAY…DPED.

The protein belongs to the cyclophilin-type PPIase family. PPIase D subfamily.

It localises to the cytoplasm. It carries out the reaction [protein]-peptidylproline (omega=180) = [protein]-peptidylproline (omega=0). In terms of biological role, PPIases accelerate the folding of proteins. It catalyzes the cis-trans isomerization of proline imidic peptide bonds in oligopeptides. This chain is Peptidyl-prolyl cis-trans isomerase D (cyp12), found in Rhizopus delemar (strain RA 99-880 / ATCC MYA-4621 / FGSC 9543 / NRRL 43880) (Mucormycosis agent).